Consider the following 26-residue polypeptide: Glycyl-poneratoxin (26 aa).

At arginine 25 the chain carries Arginine amide; in delta-paraponeritoxin-Pc1a.

The glycine-PoTx is a non-amidated form of poneratoxin, with an extra-Gly at C-terminus. This loss of amidation does not alter toxin activity on Nav1.7/SCN9A. In terms of tissue distribution, expressed by the venom gland.

It is found in the secreted. Its function is as follows. Toxin that causes pain in vertebrates by targeting tetrodotoxin (TTX)-sensitive sodium channels in peripheral sensory neurons. Also blocks synaptic transmission and stimulates smooth muscle contraction. Converts the normally rapidly activating and inactivating sodium channel current into one that does not inactivate. Is active on both Nav1.6/SCN8A and Nav1.7/SCN9A sodium channels, with a much potent activity on Nav1.6/SCN8A (EC(50)=97 nM on human channels) than on Nav1.7/SCN9A (EC(50)=2.3 uM on human and EC(50)=1.8 uM on mouse channels). On these channels, causes a sustained current, a reduction in peak current amplitude and a hyperpolarising shift. Modulates Nav1.7/SCN9A in a non-competitive manner with TTX or tetracaine. Toxin-induced persistant current is very slowly reversible with repeated wash steps over 30 minutes. In vivo, shallow intraplantar injection in mice causes immediate, long-lasting and near-maximal nocifensive behaviors, which decrease with coinjection of TTX. When tested on insects, causes paralysis but not mortality at high doses. This is Glycyl-poneratoxin from Paraponera clavata (Bullet ant).